A 537-amino-acid polypeptide reads, in one-letter code: Sodium/hydrogen exchanger 9B2 (537 aa).

Over residues 1–10 the composition is skewed to basic and acidic residues; that stretch reads MGDEDKRITY. The disordered stretch occupies residues 1–28; that stretch reads MGDEDKRITYEDSEPSTGMNYTPSMHQE. Residues 1 to 86 are Cytoplasmic-facing; the sequence is MGDEDKRITY…ACPPHGLLDR (86 aa). Positions 15 to 27 are enriched in polar residues; the sequence is PSTGMNYTPSMHQ. Serine 49 is subject to Phosphoserine. The chain crosses the membrane as a helical span at residues 87 to 104; the sequence is VITNVTIIVLLWAVVWSI. Topologically, residues 105 to 113 are extracellular; that stretch reads TGSECLPGG. Residues 114 to 133 traverse the membrane as a helical segment; sequence NLFGIIILFYCAIIGGKLLG. Residues 134-144 lie on the Cytoplasmic side of the membrane; that stretch reads LIKLPTLPPLP. Residues 145–161 form a helical membrane-spanning segment; that stretch reads SLLGMLLAGFLIRNIPV. The Extracellular segment spans residues 162–171; the sequence is INDNVQIKHK. A helical transmembrane segment spans residues 172–189; the sequence is WSSSLRSIALSIILVRAG. Residues 190–200 are Cytoplasmic-facing; that stretch reads LGLDSKALKKL. Residues 201–227 traverse the membrane as a helical segment; that stretch reads KGVCVRLSMGPCIVEACTSALLAHYLL. Residues 228–233 are Extracellular-facing; it reads GLPWQW. A helical membrane pass occupies residues 234 to 242; the sequence is GFILGFVLG. Residues 243 to 270 lie on the Cytoplasmic side of the membrane; the sequence is AVSPAVVVPSMLLLQGGGYGVEKGVPTL. Na(+)-binding residues include valine 244, glycine 275, aspartate 278, and aspartate 279. A helical transmembrane segment spans residues 271–290; sequence LMAAGSFDDILAITGFNTCL. Residues 291–300 lie on the Extracellular side of the membrane; the sequence is GIAFSTGSTV. The chain crosses the membrane as a helical span at residues 301 to 324; sequence FNVLRGVLEVVIGVATGSVLGFFI. The Cytoplasmic portion of the chain corresponds to 325–339; the sequence is QYFPSRDQDKLVCKR. Residues 340–357 form a helical membrane-spanning segment; it reads TFLVLGLSVLAVFSSVHF. Residues 358–361 are Extracellular-facing; that stretch reads GFPG. The helical transmembrane segment at 362 to 373 threads the bilayer; it reads SGGLCTLVMAFL. The Cytoplasmic segment spans residues 374–390; sequence AGMGWTSEKAEVEKIIA. Residues 391–411 form a helical membrane-spanning segment; that stretch reads VAWDIFQPLLFGLIGAEVSIA. The Extracellular segment spans residues 412–417; sequence SLRPET. Residues 418–440 traverse the membrane as a helical segment; the sequence is VGLCVATVGIAVLIRILTTFLMV. The Cytoplasmic segment spans residues 441-461; that stretch reads CFAGFNLKEKIFISFAWLPKA. Residues 462-473 form a helical membrane-spanning segment; the sequence is TVQAAIGSVALD. Topologically, residues 474–486 are extracellular; that stretch reads TARSHGEKQLEDY. The chain crosses the membrane as a helical span at residues 487–509; sequence GMDVLTVAFLSILITAPIGSLLI. Topologically, residues 510 to 537 are cytoplasmic; the sequence is GLLGPRLLQKVEHQNKDEEVQGETSVQV.

It belongs to the monovalent cation:proton antiporter 1 (CPA1) transporter (TC 2.A.36) family. As to quaternary structure, homodimer. Dimerization is essential for SLC9B2 activity. Lipids seem to play a role in the stabilization of the dimerization subdomain. In terms of tissue distribution, widely expressed. High levels detected in the distal tubules of the kidney nephron. Detected in red blood cells (at protein level).

The protein resides in the cell membrane. It is found in the mitochondrion membrane. The protein localises to the endosome membrane. Its subcellular location is the recycling endosome membrane. It localises to the cytoplasmic vesicle. The protein resides in the secretory vesicle. It is found in the synaptic vesicle membrane. The protein localises to the cell projection. Its subcellular location is the cilium. It localises to the flagellum membrane. The protein resides in the basolateral cell membrane. It is found in the apical cell membrane. It catalyses the reaction Li(+)(out) + H(+)(in) = Li(+)(in) + H(+)(out). It carries out the reaction Li(+)(in) + Na(+)(out) = Li(+)(out) + Na(+)(in). The enzyme catalyses Na(+)(in) + H(+)(out) = Na(+)(out) + H(+)(in). Its activity is regulated as follows. Allosterically inhibited by the N-terminal domain. Inhibited by phloretin. Electroneutral Na(+) Li(+)/H(+) antiporter that extrudes Na(+) or Li(+) in exchange for external protons across the membrane. Uses the proton gradient/membrane potential to extrude sodium. Contributes to the regulation of intracellular pH and sodium homeostasis. Also able to mediate Na(+)/Li(+) antiporter activity in kidney. May play a physiological role in renal tubular function and blood pressure homeostasis. Plays an important role for insulin secretion and clathrin-mediated endocytosis in beta-cells. Involved in sperm motility and fertility. It is controversial whether SLC9B2 plays a role in osteoclast differentiation or not. This is Sodium/hydrogen exchanger 9B2 from Homo sapiens (Human).